A 117-amino-acid polypeptide reads, in one-letter code: Large ribosomal subunit protein bL20c (117 aa).

Belongs to the bacterial ribosomal protein bL20 family.

Its subcellular location is the plastid. It localises to the chloroplast. Binds directly to 23S ribosomal RNA and is necessary for the in vitro assembly process of the 50S ribosomal subunit. It is not involved in the protein synthesizing functions of that subunit. In Citrus sinensis (Sweet orange), this protein is Large ribosomal subunit protein bL20c.